Consider the following 101-residue polypeptide: Protein RnfH (101 aa).

It belongs to the UPF0125 (RnfH) family.

In Pseudomonas aeruginosa (strain LESB58), this protein is Protein RnfH.